Consider the following 564-residue polypeptide: 4-hydroxy-7-methoxy-3-oxo-3,4-dihydro-2H-1,4-benzoxazin-2-yl glucoside beta-D-glucosidase 1d, chloroplastic (564 aa).

A chloroplast-targeting transit peptide spans 1 to 50 (MALLAAATLNPTTHLSLRSRAGRNSENLWLRSAASSQKSKGRFCNLTVRA). A beta-D-glucoside is bound by residues Gln-92, His-194, and 239-240 (NE). The active-site Proton donor is Glu-240. Cys-259 and Cys-265 are oxidised to a cystine. A beta-D-glucoside-binding positions include Tyr-383, Glu-456, Trp-504, 511 to 512 (EW), and Phe-520. The active-site Nucleophile is Glu-456.

It belongs to the glycosyl hydrolase 1 family. Homo- and heterohexamers. In terms of tissue distribution, expressed in young seedlings early after germination.

It localises to the plastid. The protein resides in the chloroplast. The catalysed reaction is Hydrolysis of terminal, non-reducing beta-D-glucosyl residues with release of beta-D-glucose.. It carries out the reaction DIMBOA beta-D-glucoside + H2O = DIMBOA + D-glucose. It catalyses the reaction DIBOA beta-D-glucoside + H2O = DIBOA + D-glucose. In terms of biological role, acts in defense of young plant parts against pests via the production of hydroxamic acids from hydroxamic acid glucosides. Enzymatic activity is highly correlated with plant growth. The preferred substrate is DIMBOA-beta-D-glucoside. The chain is 4-hydroxy-7-methoxy-3-oxo-3,4-dihydro-2H-1,4-benzoxazin-2-yl glucoside beta-D-glucosidase 1d, chloroplastic (GLU1D) from Triticum aestivum (Wheat).